Here is a 539-residue protein sequence, read N- to C-terminus: Inositol 1,4,5-triphosphate receptor associated 2 (539 aa).

Disordered stretches follow at residues 1 to 21 (MLCV…DVTR), 69 to 98 (YLTQ…LHMA), and 147 to 171 (AGEE…ISMP). At 1-479 (MLCVKGPPEQ…LQASFRRANR (479 aa)) the chain is on the cytoplasmic side. Positions 74–92 (SSEQTSSSESTVTSSESGS) are enriched in low complexity. Thr-78 carries the post-translational modification Phosphothreonine. The stretch at 298 to 326 (MIQHVENLKRMYAKEHAELEDLKQALLQN) forms a coiled coil. The segment at 334–353 (PDEDDCQIKKRSSSLNSKPS) is disordered. A phosphoserine mark is found at Ser-347, Ser-354, and Ser-408. Positions 418-449 (ERSDVKARDAPEPQGEEAVERTRKPSLSERRS) are disordered. Residues 435 to 449 (AVERTRKPSLSERRS) are compositionally biased toward basic and acidic residues. Residues 480-500 (ALWLTGLIIILIAALMSFLTG) traverse the membrane as a helical; Anchor for type IV membrane protein segment. Residues 501–539 (QLFQTAVEAAPTQEGDSWLSLEHILWPFTRLGHDGPPPV) lie on the Lumenal side of the membrane.

Belongs to the IRAG2 family. As to quaternary structure, interacts (via coiled-coil domain) with ITPR3. Interacts with SUN1 and SUN2. Interacts with microtubules. Interacts with HCN4; regulates HCN4 channel activity. The removal of the C-terminal lumenal domain occurs by proteolytic processing. Spleen and thymus. Expressed at high levels in pre B-cells, mature B-cells and pre T-cells. Expressed at low levels in mature T-cells and plasma B-cells. Expressed in circumvallate (CV), foliate (FL) and fungiform (FF) taste papillae cells of the tongue epithelium.

The protein localises to the cytoplasm. The protein resides in the endoplasmic reticulum membrane. It is found in the nucleus envelope. Its subcellular location is the cytoskeleton. It localises to the microtubule organizing center. The protein localises to the centrosome. The protein resides in the spindle pole. It is found in the chromosome. In terms of biological role, plays a role in the delivery of peptides to major histocompatibility complex (MHC) class I molecules; this occurs in a transporter associated with antigen processing (TAP)-independent manner. May play a role in taste signal transduction via ITPR3. May play a role during fertilization in pronucleus congression and fusion. Plays a role in maintaining nuclear shape, maybe as a component of the LINC complex and through interaction with microtubules. Plays a role in the regulation of cellular excitability by regulating the hyperpolarization-activated cyclic nucleotide-gated HCN4 channel activity. The protein is Inositol 1,4,5-triphosphate receptor associated 2 (Irag2) of Mus musculus (Mouse).